Here is a 141-residue protein sequence, read N- to C-terminus: Large ribosomal subunit protein uL14 (141 aa).

It belongs to the universal ribosomal protein uL14 family. In terms of assembly, part of the 50S ribosomal subunit. Forms a cluster with proteins L3 and L24e, part of which may contact the 16S rRNA in 2 intersubunit bridges.

In terms of biological role, binds to 23S rRNA. Forms part of two intersubunit bridges in the 70S ribosome. The protein is Large ribosomal subunit protein uL14 of Pyrococcus horikoshii (strain ATCC 700860 / DSM 12428 / JCM 9974 / NBRC 100139 / OT-3).